A 459-amino-acid polypeptide reads, in one-letter code: MAKPSQPTRDSHVAVLVFPFGTHAAPLLAVTCRLATAAPSTVFSFFSTARSNSSLLSSDIPTNIRVHNVDDGVPEGFVLTGNPQHAVELFLEAAPEIFRREIKAAETEVGRKFKCILTDAFLWLAAETAAAEMKASWVAYYGGGATSLTAHLYTDAIRENVGVKEVGERMEETIGFISGMEKIRVKDTQEGVVFGNLDSVFSKTLHQMGLALPRATAVFINSFEELDPTFTNDFRSEFKRYLNIGPLALLSSPSQTSTLVHDPHGCLAWIEKRSTASVAYIAFGRVATPPPVELVAIAQGLESSKVPFVWSLQEMKMTHLPEGFLDRTREQGMVVPWAPQVELLNHEAMGVFVSHGGWNSVLESVSAGVPMICRPIFGDHAINARSVEAVWEIGVTISSGVFTKDGFEESLDRVLVQDDGKKMKVNAKKLEELAQEAVSTKGSSFENFGGLLDEVVNFG.

UDP-alpha-D-glucose-binding positions include 338–340 (APQ), 355–363 (HGGWNSVLE), and 377–380 (FGDH).

It belongs to the UDP-glycosyltransferase family.

In terms of biological role, possesses low quercetin 3-O-glucosyltransferase activity in vitro. This chain is UDP-glycosyltransferase 78D3 (UGT78D3), found in Arabidopsis thaliana (Mouse-ear cress).